A 200-amino-acid polypeptide reads, in one-letter code: Large ribosomal subunit protein uL4 (200 aa).

The segment at 38–75 is disordered; sequence GRQGSKQQKNRSDVSGGGKRPWRQKGTGRARAGTSRGP.

The protein belongs to the universal ribosomal protein uL4 family. As to quaternary structure, part of the 50S ribosomal subunit.

One of the primary rRNA binding proteins, this protein initially binds near the 5'-end of the 23S rRNA. It is important during the early stages of 50S assembly. It makes multiple contacts with different domains of the 23S rRNA in the assembled 50S subunit and ribosome. Functionally, forms part of the polypeptide exit tunnel. The sequence is that of Large ribosomal subunit protein uL4 from Azotobacter vinelandii (strain DJ / ATCC BAA-1303).